The sequence spans 147 residues: UPF0179 protein NP_3406A (147 aa).

It belongs to the UPF0179 family.

The chain is UPF0179 protein NP_3406A from Natronomonas pharaonis (strain ATCC 35678 / DSM 2160 / CIP 103997 / JCM 8858 / NBRC 14720 / NCIMB 2260 / Gabara) (Halobacterium pharaonis).